We begin with the raw amino-acid sequence, 168 residues long: Histone doublet miniH2B-H2A (168 aa).

It localises to the host nucleus. The protein localises to the host cytoplasm. It is found in the virion. Its function is as follows. Histone-like protein that is recruited to viral factories during viral replication and participates in viral DNA packaging and virion production probably by forming unstable nucleosome-like particles. May compact the viral DNA. In Melbournevirus (MelV), this protein is Histone doublet miniH2B-H2A.